A 363-amino-acid polypeptide reads, in one-letter code: Small ribosomal subunit biogenesis GTPase RsgA (363 aa).

Residues 112 to 268 form the CP-type G domain; the sequence is HQQVIAANID…LIDTPGMREL (157 aa). Residues 157 to 160 and 210 to 218 contribute to the GTP site; these read TKAD and GSSGAGKST. Residues Cys291, Cys296, His298, and Cys304 each coordinate Zn(2+). Residues 340–363 are disordered; it reads RVAQNNRGKGSGKRPASVDRPGRH.

It belongs to the TRAFAC class YlqF/YawG GTPase family. RsgA subfamily. As to quaternary structure, monomer. Associates with 30S ribosomal subunit, binds 16S rRNA. Zn(2+) serves as cofactor.

The protein resides in the cytoplasm. In terms of biological role, one of several proteins that assist in the late maturation steps of the functional core of the 30S ribosomal subunit. Helps release RbfA from mature subunits. May play a role in the assembly of ribosomal proteins into the subunit. Circularly permuted GTPase that catalyzes slow GTP hydrolysis, GTPase activity is stimulated by the 30S ribosomal subunit. The sequence is that of Small ribosomal subunit biogenesis GTPase RsgA from Xanthomonas axonopodis pv. citri (strain 306).